A 233-amino-acid polypeptide reads, in one-letter code: Large ribosomal subunit protein uL1 (233 aa).

This sequence belongs to the universal ribosomal protein uL1 family. As to quaternary structure, part of the 50S ribosomal subunit.

Its function is as follows. Binds directly to 23S rRNA. The L1 stalk is quite mobile in the ribosome, and is involved in E site tRNA release. Functionally, protein L1 is also a translational repressor protein, it controls the translation of the L11 operon by binding to its mRNA. This is Large ribosomal subunit protein uL1 from Shewanella frigidimarina (strain NCIMB 400).